The following is a 493-amino-acid chain: Glutamyl-tRNA(Gln) amidotransferase subunit A (493 aa).

Residues Lys-79 and Ser-159 each act as charge relay system in the active site. Catalysis depends on Ser-183, which acts as the Acyl-ester intermediate.

It belongs to the amidase family. GatA subfamily. In terms of assembly, heterotrimer of A, B and C subunits.

The catalysed reaction is L-glutamyl-tRNA(Gln) + L-glutamine + ATP + H2O = L-glutaminyl-tRNA(Gln) + L-glutamate + ADP + phosphate + H(+). Its function is as follows. Allows the formation of correctly charged Gln-tRNA(Gln) through the transamidation of misacylated Glu-tRNA(Gln) in organisms which lack glutaminyl-tRNA synthetase. The reaction takes place in the presence of glutamine and ATP through an activated gamma-phospho-Glu-tRNA(Gln). This is Glutamyl-tRNA(Gln) amidotransferase subunit A from Brucella abortus (strain S19).